We begin with the raw amino-acid sequence, 485 residues long: Peptidyl-prolyl isomerase CWC27 (485 aa).

In terms of domain architecture, PPIase cyclophilin-type spans 11–167 (SSGLVDLVTS…YPIKLHEVRV (157 aa)). Residues 173–485 (DDLQPRTTKK…PQQRRQRSII (313 aa)) are disordered. Basic and acidic residues-rich tracts occupy residues 184-204 (RIAE…EEQK) and 236-247 (SSHDLLKDDKHL). 4 stretches are compositionally biased toward polar residues: residues 249–270 (RQTI…ANIS), 278–292 (AQSS…VTKQ), 315–325 (PSDQKASSSTG), and 353–370 (ALLS…STTP). The span at 381 to 398 (DEVEEEAGEYGASDDDDD) shows a compositional bias: acidic residues. Positions 428–465 (LDPRDHTDRERNPKAESSRDGKRGRDWVEHDRKYQNDR) are enriched in basic and acidic residues. The span at 466-485 (SRRHREHDKHPQQRRQRSII) shows a compositional bias: basic residues.

It belongs to the cyclophilin-type PPIase family. CWC27 subfamily. In terms of assembly, associated with the spliceosome.

Its subcellular location is the cytoplasm. It is found in the nucleus. It carries out the reaction [protein]-peptidylproline (omega=180) = [protein]-peptidylproline (omega=0). Its function is as follows. PPIases accelerate the folding of proteins. It catalyzes the cis-trans isomerization of proline imidic peptide bonds in oligopeptides. Involved in pre-mRNA splicing. In Mycosarcoma maydis (Corn smut fungus), this protein is Peptidyl-prolyl isomerase CWC27 (CWC27).